A 134-amino-acid polypeptide reads, in one-letter code: Fluoride-specific ion channel FluC 2 (134 aa).

Helical transmembrane passes span 1–21, 28–48, 68–88, and 92–112; these read MNYF…EITG, IFPV…LFFM, GFLG…LLLF, and LLIG…SGIL. Residues Gly71 and Thr74 each coordinate Na(+).

This sequence belongs to the fluoride channel Fluc/FEX (TC 1.A.43) family.

It localises to the cell membrane. The enzyme catalyses fluoride(in) = fluoride(out). Its activity is regulated as follows. Na(+) is not transported, but it plays an essential structural role and its presence is essential for fluoride channel function. Fluoride-specific ion channel. Important for reducing fluoride concentration in the cell, thus reducing its toxicity. This is Fluoride-specific ion channel FluC 2 from Carboxydothermus hydrogenoformans (strain ATCC BAA-161 / DSM 6008 / Z-2901).